A 333-amino-acid chain; its full sequence is Ribosomal RNA small subunit methyltransferase C (333 aa).

It belongs to the methyltransferase superfamily. RsmC family. Monomer.

The protein resides in the cytoplasm. The catalysed reaction is guanosine(1207) in 16S rRNA + S-adenosyl-L-methionine = N(2)-methylguanosine(1207) in 16S rRNA + S-adenosyl-L-homocysteine + H(+). Its function is as follows. Specifically methylates the guanine in position 1207 of 16S rRNA in the 30S particle. The polypeptide is Ribosomal RNA small subunit methyltransferase C (Mannheimia succiniciproducens (strain KCTC 0769BP / MBEL55E)).